Consider the following 351-residue polypeptide: 3-dehydroquinate synthase (351 aa).

Residues 60 to 65, 94 to 98, 118 to 119, Lys-131, Lys-140, and 158 to 161 contribute to the NAD(+) site; these read DGEEYK, GVISD, TT, and FLKT. Glu-173, His-239, and His-256 together coordinate Zn(2+).

Belongs to the sugar phosphate cyclases superfamily. Dehydroquinate synthase family. Co(2+) serves as cofactor. Requires Zn(2+) as cofactor. The cofactor is NAD(+).

The protein resides in the cytoplasm. The catalysed reaction is 7-phospho-2-dehydro-3-deoxy-D-arabino-heptonate = 3-dehydroquinate + phosphate. Its pathway is metabolic intermediate biosynthesis; chorismate biosynthesis; chorismate from D-erythrose 4-phosphate and phosphoenolpyruvate: step 2/7. Catalyzes the conversion of 3-deoxy-D-arabino-heptulosonate 7-phosphate (DAHP) to dehydroquinate (DHQ). This Campylobacter jejuni subsp. jejuni serotype O:23/36 (strain 81-176) protein is 3-dehydroquinate synthase.